The primary structure comprises 169 residues: Lipoprotein signal peptidase (169 aa).

Helical transmembrane passes span 4–24 (PICSTGLRWLWLAVVVVILDI), 29–49 (WVMAHFALYESVPLIPFFNLT), 70–90 (WFFAGIAIGISVVLMVMMYRS), and 101–121 (YALIIGGALGNLYDRLVHGAV). Catalysis depends on residues Asp-123 and Asp-141. Residues 137–157 (FNLADVAICIGAALVIFEGFL) form a helical membrane-spanning segment.

This sequence belongs to the peptidase A8 family.

It localises to the cell inner membrane. It carries out the reaction Release of signal peptides from bacterial membrane prolipoproteins. Hydrolyzes -Xaa-Yaa-Zaa-|-(S,diacylglyceryl)Cys-, in which Xaa is hydrophobic (preferably Leu), and Yaa (Ala or Ser) and Zaa (Gly or Ala) have small, neutral side chains.. It functions in the pathway protein modification; lipoprotein biosynthesis (signal peptide cleavage). Its function is as follows. This protein specifically catalyzes the removal of signal peptides from prolipoproteins. This Yersinia pestis bv. Antiqua (strain Antiqua) protein is Lipoprotein signal peptidase.